The primary structure comprises 87 residues: MVKKAFISVISQEENRGSVEFQVVSFTNKIRRLTSHLEFHRKDFLSQRGLRKILGKRQRLLSYLSKKDKVRYTELISQLDIRELTTR.

The protein belongs to the universal ribosomal protein uS15 family. In terms of assembly, part of the 30S ribosomal subunit.

It is found in the plastid. The protein resides in the chloroplast. This chain is Small ribosomal subunit protein uS15c (rps15), found in Oenothera biennis (German evening primrose).